The sequence spans 280 residues: Phosphatidylserine decarboxylase proenzyme (280 aa).

Catalysis depends on charge relay system; for autoendoproteolytic cleavage activity residues aspartate 88, histidine 144, and serine 247. Residue serine 247 is the Schiff-base intermediate with substrate; via pyruvic acid; for decarboxylase activity of the active site. Position 247 is a pyruvic acid (Ser); by autocatalysis (serine 247).

Belongs to the phosphatidylserine decarboxylase family. PSD-B subfamily. Prokaryotic type I sub-subfamily. In terms of assembly, heterodimer of a large membrane-associated beta subunit and a small pyruvoyl-containing alpha subunit. Pyruvate is required as a cofactor. In terms of processing, is synthesized initially as an inactive proenzyme. Formation of the active enzyme involves a self-maturation process in which the active site pyruvoyl group is generated from an internal serine residue via an autocatalytic post-translational modification. Two non-identical subunits are generated from the proenzyme in this reaction, and the pyruvate is formed at the N-terminus of the alpha chain, which is derived from the carboxyl end of the proenzyme. The autoendoproteolytic cleavage occurs by a canonical serine protease mechanism, in which the side chain hydroxyl group of the serine supplies its oxygen atom to form the C-terminus of the beta chain, while the remainder of the serine residue undergoes an oxidative deamination to produce ammonia and the pyruvoyl prosthetic group on the alpha chain. During this reaction, the Ser that is part of the protease active site of the proenzyme becomes the pyruvoyl prosthetic group, which constitutes an essential element of the active site of the mature decarboxylase.

The protein resides in the cell membrane. The enzyme catalyses a 1,2-diacyl-sn-glycero-3-phospho-L-serine + H(+) = a 1,2-diacyl-sn-glycero-3-phosphoethanolamine + CO2. The protein operates within phospholipid metabolism; phosphatidylethanolamine biosynthesis; phosphatidylethanolamine from CDP-diacylglycerol: step 2/2. Functionally, catalyzes the formation of phosphatidylethanolamine (PtdEtn) from phosphatidylserine (PtdSer). The polypeptide is Phosphatidylserine decarboxylase proenzyme (Stenotrophomonas maltophilia (strain R551-3)).